The primary structure comprises 167 residues: G/U mismatch-specific DNA glycosylase (167 aa).

It belongs to the uracil-DNA glycosylase (UDG) superfamily. TDG/mug family. Binds DNA as a monomer.

It is found in the cytoplasm. It carries out the reaction Specifically hydrolyzes mismatched double-stranded DNA and polynucleotides, releasing free uracil.. Its function is as follows. Excises ethenocytosine and uracil, which can arise by alkylation or deamination of cytosine, respectively, from the corresponding mispairs with guanine in ds-DNA. It is capable of hydrolyzing the carbon-nitrogen bond between the sugar-phosphate backbone of the DNA and the mispaired base. The complementary strand guanine functions in substrate recognition. Required for DNA damage lesion repair in stationary-phase cells. This chain is G/U mismatch-specific DNA glycosylase, found in Pectobacterium carotovorum subsp. carotovorum (strain PC1).